The chain runs to 236 residues: C-&gt;U-editing enzyme APOBEC-1 (236 aa).

Positions 10–134 constitute a CMP/dCMP-type deaminase domain; that stretch reads GDPTLRRRIE…QRNRQGLRDL (125 aa). Residue H61 coordinates Zn(2+). Catalysis depends on E63, which acts as the Proton donor. 2 residues coordinate Zn(2+): C93 and C96.

It belongs to the cytidine and deoxycytidylate deaminase family. Homodimer. Interacts with A1CF; form an mRNA editing complex. Interacts with RBM47; form an mRNA editing complex. Found in a complex with CELF2/CUGBP2 and A1CF. Interacts with HNRPAB. Interacts with SYNCRIP. Zn(2+) serves as cofactor.

It localises to the cytoplasm. The protein localises to the nucleus. The enzyme catalyses a cytidine in mRNA + H2O + H(+) = a uridine in mRNA + NH4(+). It catalyses the reaction cytidine(6666) in apoB mRNA + H2O + H(+) = uridine(6666) in apoB mRNA + NH4(+). Its function is as follows. Cytidine deaminase catalyzing the cytidine to uridine postranscriptional editing of a variety of mRNAs. Form complexes with cofactors that confer differential editing activity and selectivity. Responsible for the postranscriptional editing of a CAA codon for Gln to a UAA codon for stop in the apolipoprotein B mRNA. Also involved in CGA (Arg) to UGA (Stop) editing in the NF1 mRNA. May also play a role in the epigenetic regulation of gene expression by participating in DNA demethylation. This is C-&gt;U-editing enzyme APOBEC-1 from Pongo pygmaeus (Bornean orangutan).